Reading from the N-terminus, the 299-residue chain is Bifunctional protein FolD (299 aa).

NADP(+)-binding positions include 168–170 (GRS), S193, and I234.

This sequence belongs to the tetrahydrofolate dehydrogenase/cyclohydrolase family. Homodimer.

It catalyses the reaction (6R)-5,10-methylene-5,6,7,8-tetrahydrofolate + NADP(+) = (6R)-5,10-methenyltetrahydrofolate + NADPH. The catalysed reaction is (6R)-5,10-methenyltetrahydrofolate + H2O = (6R)-10-formyltetrahydrofolate + H(+). It functions in the pathway one-carbon metabolism; tetrahydrofolate interconversion. Its function is as follows. Catalyzes the oxidation of 5,10-methylenetetrahydrofolate to 5,10-methenyltetrahydrofolate and then the hydrolysis of 5,10-methenyltetrahydrofolate to 10-formyltetrahydrofolate. In Bartonella quintana (strain Toulouse) (Rochalimaea quintana), this protein is Bifunctional protein FolD.